We begin with the raw amino-acid sequence, 124 residues long: Fluoride-specific ion channel FluC (124 aa).

Transmembrane regions (helical) follow at residues 1 to 21, 38 to 58, 69 to 89, and 97 to 117; these read MIPL…LRFA, TLAV…LFLV, GLIV…LDTV, and VALA…ATWA. Residues Gly76 and Thr79 each contribute to the Na(+) site.

It belongs to the fluoride channel Fluc/FEX (TC 1.A.43) family.

The protein localises to the cell inner membrane. The enzyme catalyses fluoride(in) = fluoride(out). Na(+) is not transported, but it plays an essential structural role and its presence is essential for fluoride channel function. Functionally, fluoride-specific ion channel. Important for reducing fluoride concentration in the cell, thus reducing its toxicity. This Pseudomonas fluorescens (strain ATCC BAA-477 / NRRL B-23932 / Pf-5) protein is Fluoride-specific ion channel FluC.